A 336-amino-acid polypeptide reads, in one-letter code: Pyridoxal 5'-phosphate synthase subunit PdxS (336 aa).

Asp30 is a binding site for D-ribose 5-phosphate. Lys87 serves as the catalytic Schiff-base intermediate with D-ribose 5-phosphate. Gly159 contributes to the D-ribose 5-phosphate binding site. Arg171 contacts D-glyceraldehyde 3-phosphate. D-ribose 5-phosphate is bound by residues Gly257 and 278-279; that span reads GS.

This sequence belongs to the PdxS/SNZ family. In the presence of PdxT, forms a dodecamer of heterodimers.

The catalysed reaction is aldehydo-D-ribose 5-phosphate + D-glyceraldehyde 3-phosphate + L-glutamine = pyridoxal 5'-phosphate + L-glutamate + phosphate + 3 H2O + H(+). The protein operates within cofactor biosynthesis; pyridoxal 5'-phosphate biosynthesis. In terms of biological role, catalyzes the formation of pyridoxal 5'-phosphate from ribose 5-phosphate (RBP), glyceraldehyde 3-phosphate (G3P) and ammonia. The ammonia is provided by the PdxT subunit. Can also use ribulose 5-phosphate and dihydroxyacetone phosphate as substrates, resulting from enzyme-catalyzed isomerization of RBP and G3P, respectively. This is Pyridoxal 5'-phosphate synthase subunit PdxS from Thermoplasma volcanium (strain ATCC 51530 / DSM 4299 / JCM 9571 / NBRC 15438 / GSS1).